The primary structure comprises 89 residues: UPF0223 protein BCG9842_B1176 (89 aa).

This sequence belongs to the UPF0223 family.

The polypeptide is UPF0223 protein BCG9842_B1176 (Bacillus cereus (strain G9842)).